We begin with the raw amino-acid sequence, 248 residues long: Killer cell lectin-like receptor subfamily I member 1 (248 aa).

Over methionine 1 to arginine 80 the chain is Cytoplasmic. Short sequence motifs (ITIM motif) lie at residues valine 16–leucine 21 and leucine 47–leucine 52. Residues valine 81–leucine 101 traverse the membrane as a helical; Signal-anchor for type II membrane protein segment. Over proline 102 to isoleucine 248 the chain is Extracellular. 3 disulfides stabilise this stretch: cysteine 132-cysteine 145, cysteine 161-cysteine 244, and cysteine 223-cysteine 236. A C-type lectin domain is found at phenylalanine 139–glutamate 245. Residues asparagine 197, asparagine 214, and asparagine 220 are each glycosylated (N-linked (GlcNAc...) asparagine).

As to quaternary structure, heterodimer with KLRE1. Interacts with PTPN6. Expressed in natural killer (NK) cells.

It is found in the cell membrane. Its function is as follows. Lectin-like receptor for natural killer (NK) cells. Heterodimer formation with KLRE1 mediates inhibition of NK cell cytolytic activity. The polypeptide is Killer cell lectin-like receptor subfamily I member 1 (Mus musculus (Mouse)).